The chain runs to 119 residues: NADH dehydrogenase [ubiquinone] 1 subunit C2 (119 aa).

A helical transmembrane segment spans residues 56–75; the sequence is GLHRQLLYITAFFFAGYYLV.

Belongs to the complex I NDUFC2 subunit family. Complex I is composed of 45 different subunits. Interacts with TMEM242.

The protein localises to the mitochondrion inner membrane. Accessory subunit of the mitochondrial membrane respiratory chain NADH dehydrogenase (Complex I), that is believed not to be involved in catalysis but required for the complex assembly. Complex I functions in the transfer of electrons from NADH to the respiratory chain. The immediate electron acceptor for the enzyme is believed to be ubiquinone. The polypeptide is NADH dehydrogenase [ubiquinone] 1 subunit C2 (Pan troglodytes (Chimpanzee)).